The primary structure comprises 144 residues: F420-non-reducing hydrogenase vhc iron-sulfur subunit D (144 aa).

Belongs to the MvhD/VhuD family. In terms of assembly, the F420-non-reducing hydrogenase vhc is composed of three subunits; VhcA, VhcD and VhcG. [2Fe-2S] cluster serves as cofactor.

This Methanococcus voltae protein is F420-non-reducing hydrogenase vhc iron-sulfur subunit D (vhcD).